The chain runs to 440 residues: MQVTETLTEGLKRGFTVVVPGSDLSEKREKRLAELSKTMQMPGFRPGKVPLSMVRKRFGDAVAAEVMEASVNEATERMINDRSLRPAVQPKVEVVRAEPDSDLEFTVELEVLPEVTIPDLKAISLTRPKAPVTEAEIDEAIARFAEQRAETEVVTEDRPAATGDILTVDFLGKRDGVPFEGGAGTDTDIELGGSGFIPGFAEQMEGMKAGETKVITVTFPEQYHAAELAGKEATFDITAKALKRRVAPVIDDAFAEANGFENLAEFRKFFADRLEQSRAGASRLKVKRALLDKLAEQADFPAPASLVDAEFAEIWRQVEAEKQAGRLDEEDAGKDEETLRADYRAIAERRVRLGLLVAEIGRTNNVQITEQDMRRAMIAEMQQFPGQEKMIMEFYQKNPRALDRLRGPIFEDKVVDYALELATVTDEEVSAEALFADTDD.

A PPIase FKBP-type domain is found at 163-248 (GDILTVDFLG…AKALKRRVAP (86 aa)).

The protein belongs to the FKBP-type PPIase family. Tig subfamily.

Its subcellular location is the cytoplasm. The catalysed reaction is [protein]-peptidylproline (omega=180) = [protein]-peptidylproline (omega=0). Functionally, involved in protein export. Acts as a chaperone by maintaining the newly synthesized protein in an open conformation. Functions as a peptidyl-prolyl cis-trans isomerase. This is Trigger factor from Acidiphilium cryptum (strain JF-5).